Here is a 329-residue protein sequence, read N- to C-terminus: GTPase Obg (329 aa).

The Obg domain maps to 1–159 (MQFIDQARIT…WFLQLELKLL (159 aa)). The OBG-type G domain occupies 160 to 328 (AEVGIIGLPN…LLAQVWKELG (169 aa)). ATP-binding positions include 166–173 (GLPNAGKS), 191–195 (FTTLV), 213–216 (DIPG), 280–283 (NKQE), and 309–311 (SAA). S173 and T193 together coordinate Mg(2+).

It belongs to the TRAFAC class OBG-HflX-like GTPase superfamily. OBG GTPase family. As to quaternary structure, monomer. The cofactor is Mg(2+).

The protein localises to the cytoplasm. In terms of biological role, an essential GTPase which binds GTP, GDP and possibly (p)ppGpp with moderate affinity, with high nucleotide exchange rates and a fairly low GTP hydrolysis rate. Plays a role in control of the cell cycle, stress response, ribosome biogenesis and in those bacteria that undergo differentiation, in morphogenesis control. The protein is GTPase Obg of Prochlorococcus marinus (strain MIT 9313).